Reading from the N-terminus, the 361-residue chain is Molybdenum import ATP-binding protein ModC 1 (361 aa).

Residues 1-237 form the ABC transporter domain; that stretch reads MPADGIRARF…LDLPTAFHED (237 aa). 35–42 lines the ATP pocket; the sequence is GHSGSGKT. A Mop domain is found at 296 to 361; it reads DSSITNVLPA…AQIKAVALLG (66 aa).

The protein belongs to the ABC transporter superfamily. Molybdate importer (TC 3.A.1.8) family. As to quaternary structure, the complex is composed of two ATP-binding proteins (ModC), two transmembrane proteins (ModB) and a solute-binding protein (ModA).

It is found in the cell inner membrane. It carries out the reaction molybdate(out) + ATP + H2O = molybdate(in) + ADP + phosphate + H(+). In terms of biological role, part of the ABC transporter complex ModABC involved in molybdenum import. Responsible for energy coupling to the transport system. This chain is Molybdenum import ATP-binding protein ModC 1, found in Azotobacter vinelandii.